The chain runs to 203 residues: MAEVSAQDLISQLSKSPESHKRKEYLHWDDYFMATSLLSAKRSKDPVTQVGACIVDSQNRIVAIGYNGFPRNCSDDVFPWSKAKKGSQEFDPLEDKKMYVVHAEANAILNSNGMSLSGTRLYTTLFPCNECAKLIIQVGISQVLYLSDKYADKPTYRASKRMLDAVGVEYKRHIPQKKTITIDFDTFPEEDPNASLGLNELHL.

The region spanning 27–163 (HWDDYFMATS…PTYRASKRML (137 aa)) is the CMP/dCMP-type deaminase domain. His102 contacts Zn(2+). Catalysis depends on Glu104, which acts as the Proton donor. 2 residues coordinate Zn(2+): Cys128 and Cys131.

The protein belongs to the cytidine and deoxycytidylate deaminase family. Zn(2+) is required as a cofactor.

It carries out the reaction dCMP + H2O + H(+) = dUMP + NH4(+). In terms of biological role, supplies the nucleotide substrate for thymidylate synthetase. In Drosophila melanogaster (Fruit fly), this protein is Probable deoxycytidylate deaminase.